The sequence spans 150 residues: Protein ADM2 (150 aa).

The N-terminal stretch at 1 to 25 (MAQLLMVTVTLGCISLLYLLPGTLS) is a signal peptide. The propeptide occupies 26–100 (GSLGKGLRHS…HPGPQRPTGS (75 aa)). The tract at residues 28–102 (LGKGLRHSRP…GPQRPTGSRR (75 aa)) is disordered. The cysteines at positions 112 and 117 are disulfide-linked. Y149 is subject to Tyrosine amide.

This sequence belongs to the adrenomedullin family. In terms of tissue distribution, high expression detected in the submaxillary gland, kidney, stomach, and mesentery, followed by the pituitary, lung, pancreas, intestines, spleen, thymus and ovary. Expressed mainly in the intermediate lobe of the pituitary, with sporadic in the anterior lobe.

Its subcellular location is the secreted. Intermedin/ADM2 is a peptide hormone that plays a role as physiological regulator of gastrointestinal and cardiovascular bioactivities mediated by the CALCRL-RAMPs receptor complexes. Activates the cAMP-dependent pathway through interaction with CALCRL-RAMP3 receptor complex. The chain is Protein ADM2 from Mus musculus (Mouse).